A 243-amino-acid polypeptide reads, in one-letter code: Probable transcriptional regulatory protein LSEI_1022 (243 aa).

The interval 1–23 is disordered; it reads MSGHSKWHNIQGRKNAQDSKRGK.

Belongs to the TACO1 family.

The protein resides in the cytoplasm. The protein is Probable transcriptional regulatory protein LSEI_1022 of Lacticaseibacillus paracasei (strain ATCC 334 / BCRC 17002 / CCUG 31169 / CIP 107868 / KCTC 3260 / NRRL B-441) (Lactobacillus paracasei).